A 263-amino-acid polypeptide reads, in one-letter code: L-histidine 2-aminobutanoyltransferase (263 aa).

Belongs to the methyltransferase superfamily. CntL family. As to quaternary structure, interacts with CntM.

It carries out the reaction L-histidine + S-adenosyl-L-methionine = (2S)-2-amino-4-{[(1S)-1-carboxy-2-(1H-imidazol-4-yl)ethyl]amino}butanoate + S-methyl-5'-thioadenosine + H(+). Its function is as follows. Catalyzes the nucleophilic attack of one alpha-aminobutanoate moiety from SAM onto L-histidine to produce the intermediate (2S)-2-amino-4-{[(1S)-1-carboxy-2-(1H-imidazol-4-yl)ethyl]amino}butanoate. Functions in the biosynthesis of the metallophore pseudopaline, which is involved in the acquisition of nickel and zinc, and thus enables bacterial growth inside the host, where metal access is limited. Therefore, this enzyme probably contributes to Pseudomonas virulence. Cannot use D-histidine in place of L-histidine as substrate. This Pseudomonas aeruginosa (strain UCBPP-PA14) protein is L-histidine 2-aminobutanoyltransferase.